We begin with the raw amino-acid sequence, 1191 residues long: Roquin-2 (1191 aa).

The Zn(2+) site is built by C14, C17, C33, H35, C38, C50, and D53. Residues 14-54 (CPICYNEFDENVHKPISLGCSHTVCKTCLNKLHRKACPFDQ) form an RING-type; degenerate zinc finger. The segment at 91 to 170 (ENKHYEVAKK…RTVTELILQH (80 aa)) is HEPN-N. Residues 171-325 (QNPQQLSANL…SIIDKLQSPE (155 aa)) form an ROQ region. Positions 326-396 (SFAKSVQELT…GLVDFIQNYS (71 aa)) are HEPN-C. The segment at 410–438 (KYKTSMCRDLRQQGGCPRGTNCTFAHSQE) adopts a C3H1-type zinc-finger fold. Disordered regions lie at residues 528 to 576 (GANG…NSVP) and 644 to 680 (ESSLPPASMPYADHYSTFSPRDRMNSSPYQPPPPQPY). The segment covering 530–546 (NGQNAAGPSADSVTENK) has biased composition (polar residues). The residue at position 549 (S549) is a Phosphoserine. Residues 554–576 (PVSNVAATSAGPSNVGTELNSVP) show a composition bias toward polar residues. A phosphoserine mark is found at S808, S983, and S1119.

In terms of assembly, interacts with EDC4. Interacts with CCR4-NOT deadenylase complex. Interacts with MAP3K5; the interaction is probably stimulus-dependent. In terms of processing, proteolytically cleaved after Arg-509 and Arg-585 by MALT1 in activated CD4(+) T cells; cleavage at Arg-509 and Arg-585 is critical for promoting RC3H1 degradation in response to T-cell receptor (TCR) stimulation, and hence is necessary for prolonging the stability of a set of mRNAs controlling Th17 cell differentiation. In terms of tissue distribution, expressed in spleen, testis, ovary and small intestine.

Its subcellular location is the cytoplasm. The protein localises to the P-body. It catalyses the reaction S-ubiquitinyl-[E2 ubiquitin-conjugating enzyme]-L-cysteine + [acceptor protein]-L-lysine = [E2 ubiquitin-conjugating enzyme]-L-cysteine + N(6)-ubiquitinyl-[acceptor protein]-L-lysine.. The protein operates within protein modification; protein ubiquitination. With respect to regulation, binding to dsRNA, but not CDE RNA, crosstalks with the E3 ubiquitin ligase activity and may inhibit ubiquitination. Functionally, post-transcriptional repressor of mRNAs containing a conserved stem loop motif, called constitutive decay element (CDE), which is often located in the 3'-UTR, as in HMGXB3, ICOS, IER3, NFKBID, NFKBIZ, PPP1R10, TNF and in many more mRNAs. Binds to CDE and promotes mRNA deadenylation and degradation. This process does not involve miRNAs. In follicular helper T (Tfh) cells, represses of ICOS and TNFRSF4 expression, thus preventing spontaneous Tfh cell differentiation, germinal center B-cell differentiation in the absence of immunization and autoimmunity. In resting or LPS-stimulated macrophages, controls inflammation by suppressing TNF expression. Also recognizes CDE in its own mRNA and in that of paralogous RC3H1, possibly leading to feedback loop regulation. miRNA-binding protein that regulates microRNA homeostasis. Enhances DICER-mediated processing of pre-MIR146a but reduces mature MIR146a levels through an increase of 3' end uridylation. Both inhibits ICOS mRNA expression and they may act together to exert the suppression. Acts as a ubiquitin E3 ligase. Pairs with E2 enzymes UBE2B, UBE2D2, UBE2E2, UBE2E3, UBE2G2, UBE2K and UBE2Q2 and produces polyubiquitin chains. Shows the strongest activity when paired with UBE2N:UBE2V1 or UBE2N:UBE2V2 E2 complexes and generate both short and long polyubiquitin chains. Involved in the ubiquitination of MAP3K5. Able to interact with double-stranded RNA (dsRNA). In Homo sapiens (Human), this protein is Roquin-2 (RC3H2).